A 297-amino-acid chain; its full sequence is Thiosulfate sulfurtransferase (297 aa).

Lys14 carries the post-translational modification N6-acetyllysine; alternate. N6-succinyllysine; alternate is present on Lys14. Residues 25–143 (VGPSLRVLDA…WLKEGHPVTS (119 aa)) form the Rhodanese 1 domain. Ser35 is a glycosylation site (O-linked (GlcNAc) serine). A Phosphoserine modification is found at Ser38. Lys136 bears the N6-acetyllysine; alternate mark. N6-succinyllysine; alternate is present on Lys136. Residues 144–159 (EPSRPEPAVFKATLNR) form a hinge region. Lys163 is subject to N6-acetyllysine. Residues 173 to 288 (QSKRFQLVDS…WFRRAPPETR (116 aa)) form the Rhodanese 2 domain. Lys175 is subject to N6-acetyllysine; alternate. Lys175 carries the N6-succinyllysine; alternate modification. Residue Arg187 participates in substrate binding. Lys224 is modified (N6-acetyllysine; alternate). Lys224 carries the N6-succinyllysine; alternate modification. Lys236 carries the N6-acetyllysine modification. The residue at position 237 (Lys237) is an N6-acetyllysine; alternate. Lys237 is modified (N6-succinyllysine; alternate). Cys248 functions as the Cysteine persulfide intermediate in the catalytic mechanism. Lys250 is a substrate binding site.

In terms of assembly, monomer. As to expression, expressed in numerous tissues.

The protein localises to the mitochondrion matrix. It carries out the reaction thiosulfate + hydrogen cyanide = thiocyanate + sulfite + 2 H(+). Functionally, together with MRPL18, acts as a mitochondrial import factor for the cytosolic 5S rRNA. Only the nascent unfolded cytoplasmic form is able to bind to the 5S rRNA. Involved in the formation of iron-sulfur complexes, cyanide detoxification or modification of sulfur-containing enzymes. Other thiol compounds, besides cyanide, can act as sulfur ion acceptors. Also has weak mercaptopyruvate sulfurtransferase (MST) activity. This chain is Thiosulfate sulfurtransferase (Tst), found in Rattus norvegicus (Rat).